The chain runs to 345 residues: MVHNKNNTILKMIKGEETTHTPVWFMRQAGRSQPEYRKLKEKYSLFDITHQPELCAYVTHLPVDNYHTDAAILYKDIMTPLKPIGVDVEIKSGIGPVIHNPIKTIQDVEKLSQIDPERDVPYVLDTIKLLTEEKLNVPLIGFTGAPFTLASYMIEGGPSKNYNFTKAMMFRDEATWFALMNHLVDVSVKYVTAQVEAGAELIQIFDSWVGALNVEDYRRYIKPHMIRLISEVKEKHDVPVILFGVGASHLINEWNDLPIDVLGLDWRTSINQAQQLGVTKTLQGNLDPSILLAPWNVIEERLKPILDQGMENGKHIFNLGHGVFPEVHPETLRKVSEFVHTYTQR.

Substrate contacts are provided by residues 27–31 (RQAGR), phenylalanine 46, aspartate 76, tyrosine 152, serine 207, and histidine 321.

It belongs to the uroporphyrinogen decarboxylase family. As to quaternary structure, homodimer.

It localises to the cytoplasm. The catalysed reaction is uroporphyrinogen III + 4 H(+) = coproporphyrinogen III + 4 CO2. Its pathway is porphyrin-containing compound metabolism; protoporphyrin-IX biosynthesis; coproporphyrinogen-III from 5-aminolevulinate: step 4/4. Its function is as follows. Catalyzes the decarboxylation of four acetate groups of uroporphyrinogen-III to yield coproporphyrinogen-III. This chain is Uroporphyrinogen decarboxylase, found in Staphylococcus aureus (strain bovine RF122 / ET3-1).